The primary structure comprises 236 residues: Phosphoribosylaminoimidazole-succinocarboxamide synthase (236 aa).

It belongs to the SAICAR synthetase family.

It catalyses the reaction 5-amino-1-(5-phospho-D-ribosyl)imidazole-4-carboxylate + L-aspartate + ATP = (2S)-2-[5-amino-1-(5-phospho-beta-D-ribosyl)imidazole-4-carboxamido]succinate + ADP + phosphate + 2 H(+). Its pathway is purine metabolism; IMP biosynthesis via de novo pathway; 5-amino-1-(5-phospho-D-ribosyl)imidazole-4-carboxamide from 5-amino-1-(5-phospho-D-ribosyl)imidazole-4-carboxylate: step 1/2. This chain is Phosphoribosylaminoimidazole-succinocarboxamide synthase, found in Lysinibacillus sphaericus (strain C3-41).